Consider the following 620-residue polypeptide: MALLQISEPGQSPNPHQRRIAVGIDLGTTHSLVAAVRNGAAECLPDAEGRLLLPSVVRYLPQGRRQIGYAAMDSRSEDAANTLVSVKRFMGRGLKDIDHPERLPYAFVPGQEGDMVAMQTVDGVKSPVEVSAEILAELRHRAEDTFDEDLYGAVITVPAYFDDAQRQATKDAARLAGLNLLRLINEPTAAAIAYGLDNASEGVYAVYDLGGGTFDISILRLTQGVFEVIATGGDSALGGDDYDAVLAEWALQRLGIRAESAQDKAAARIAARACKEGLTAAESALFSARIGGNEVRLDVLRGDFDAITSALTERTLAAVRRALRDARLQREDIQGVVMVGGSTRMPQIQRAVAAFFGTEPLNNLNPDEVVALGAAIQAHQLAGNDPAGDMLLLDVIPLSLGIETMGGLVERIISRNETIPTAKAQDFTTYKDGQTALAIHVVQGERDLVADCRSLARFELRGIPPMAAGAARIRVTFTVDADGLLGVSAREQSTGVEARVDVKPSYGLSDDQIARMLQEGFATAGEDMRARALVEARVEADRMLMATRTALEADGDILPPGERQSIDVLVQALEAVREHEDASAIDAATQALARGTEAFAARRMNRGIQQALAGKSVQSL.

This sequence belongs to the heat shock protein 70 family.

Its function is as follows. Chaperone involved in the maturation of iron-sulfur cluster-containing proteins. Has a low intrinsic ATPase activity which is markedly stimulated by HscB. The sequence is that of Chaperone protein HscA homolog from Paracidovorax citrulli (strain AAC00-1) (Acidovorax citrulli).